A 428-amino-acid polypeptide reads, in one-letter code: Glutamyl-tRNA reductase (428 aa).

Substrate contacts are provided by residues 49–52 (TCNR), S109, 114–116 (EGQ), and Q120. C50 (nucleophile) is an active-site residue. 189–194 (GAGKMA) is a binding site for NADP(+).

The protein belongs to the glutamyl-tRNA reductase family. As to quaternary structure, homodimer.

The enzyme catalyses (S)-4-amino-5-oxopentanoate + tRNA(Glu) + NADP(+) = L-glutamyl-tRNA(Glu) + NADPH + H(+). It functions in the pathway porphyrin-containing compound metabolism; protoporphyrin-IX biosynthesis; 5-aminolevulinate from L-glutamyl-tRNA(Glu): step 1/2. Its pathway is porphyrin-containing compound metabolism; chlorophyll biosynthesis. In terms of biological role, catalyzes the NADPH-dependent reduction of glutamyl-tRNA(Glu) to glutamate 1-semialdehyde (GSA). The sequence is that of Glutamyl-tRNA reductase from Rippkaea orientalis (strain PCC 8801 / RF-1) (Cyanothece sp. (strain PCC 8801)).